The primary structure comprises 337 residues: Glyceraldehyde-3-phosphate dehydrogenase 1, cytosolic (337 aa).

Residues R13–I14, D35, and R82 each bind NAD(+). D-glyceraldehyde 3-phosphate-binding positions include S153–T155, T184, T213–G214, and R236. The active-site Nucleophile is C154. N318 contacts NAD(+).

The protein belongs to the glyceraldehyde-3-phosphate dehydrogenase family. Homotetramer. Phosphorylated after gibberellin treatment.

It localises to the cytoplasm. The enzyme catalyses D-glyceraldehyde 3-phosphate + phosphate + NAD(+) = (2R)-3-phospho-glyceroyl phosphate + NADH + H(+). It functions in the pathway carbohydrate degradation; glycolysis; pyruvate from D-glyceraldehyde 3-phosphate: step 1/5. In terms of biological role, key enzyme in glycolysis that catalyzes the first step of the pathway by converting D-glyceraldehyde 3-phosphate (G3P) into 3-phospho-D-glyceroyl phosphate. Essential for the maintenance of cellular ATP levels and carbohydrate metabolism. In Oryza sativa subsp. japonica (Rice), this protein is Glyceraldehyde-3-phosphate dehydrogenase 1, cytosolic (GAPC1).